We begin with the raw amino-acid sequence, 261 residues long: MIADLIQRPLLTYTLLLPRFMACFVILPVLSKQLLGGVLLRNGIVCSLALYVYPAVANQPYIEVDAFTLMLLIGKEIILGLLIGFVATIPFWALESAGFIVDNQRGAAMASLLNPGLDSQTSPTGLLLTQTLITIFFSGGAFLSLLSALFHSYVNWPVASFFPAVSEQWVDFFYNQFSQILLIAAVLAAPLLIAMFLAEFGLALISRFAPSLNVFVLAMPIKSAIASLLLVIYCMQMMSHASKAMLLVMDPISLLIPVLEK.

7 helical membrane-spanning segments follow: residues 20-40, 44-64, 77-97, 131-151, 180-200, 214-234, and 239-259; these read FMAC…GVLL, IVCS…YIEV, IILG…LESA, TLIT…ALFH, ILLI…LAEF, VFVL…VIYC, and SHAS…IPVL.

This sequence belongs to the FliR/MopE/SpaR family.

The protein resides in the cell membrane. Functionally, component of the yop secretion machinery. The chain is Yop proteins translocation protein T (yscT) from Yersinia pestis.